A 255-amino-acid chain; its full sequence is tRNA (guanine-N(1)-)-methyltransferase (255 aa).

S-adenosyl-L-methionine is bound by residues Gly113 and Ile133–Leu138.

Belongs to the RNA methyltransferase TrmD family. Homodimer.

It localises to the cytoplasm. It carries out the reaction guanosine(37) in tRNA + S-adenosyl-L-methionine = N(1)-methylguanosine(37) in tRNA + S-adenosyl-L-homocysteine + H(+). In terms of biological role, specifically methylates guanosine-37 in various tRNAs. The chain is tRNA (guanine-N(1)-)-methyltransferase from Klebsiella pneumoniae subsp. pneumoniae (strain ATCC 700721 / MGH 78578).